The primary structure comprises 268 residues: D-alanyl-D-alanine carboxypeptidase (268 aa).

A helical membrane pass occupies residues 25 to 47 (AFLWAFIISFTVCTLFLGWRLVS). Residues Q151, 179 to 181 (WVA), and S186 contribute to the substrate site. Zn(2+)-binding residues include H188 and D195. The active-site Proton donor/acceptor is the E238. Residue H241 coordinates Zn(2+).

It belongs to the peptidase M15B family. Monomer. The cofactor is Zn(2+).

Its subcellular location is the cell membrane. With respect to regulation, carboxypeptidase activity is insensitive to beta-lactams since it is not affected by penicillin G or ampicillin and is inhibited only by very high concentrations of cefalotin and cefoxitin. In terms of biological role, carboxypeptidase that cleaves the C-terminal D-alanine residue from the peptidoglycan-derived pentapeptide L-Ala-gamma-D-Glu-L-Lys-D-Ala-D-Ala in vitro. Therefore, should contribute in vivo to the hydrolysis of the D-alanyl-D-alanine-containing peptidoglycan precursors. May increase the level of glycopeptide antibiotics resistance by decreasing the availability of D-Ala-D-Ala termini from the cell surface, which constitute the antibiotic target residues. The polypeptide is D-alanyl-D-alanine carboxypeptidase (Enterococcus faecalis (strain ATCC 700802 / V583)).